The sequence spans 900 residues: Sterol regulatory element-binding protein 1 (900 aa).

Residues 1–16 show a composition bias toward low complexity; the sequence is MQSSIPSVSVSVASPA. Disordered stretches follow at residues 1 to 49 and 206 to 263; these read MQSS…TKAS and TTCK…PKKT. Residues 1 to 440 are nuclear form of sre1; complements deletions of sre1 or scp1; the sequence is MQSSIPSVSV…FALPPFLMSP (440 aa). Topologically, residues 1–442 are cytoplasmic; that stretch reads MQSSIPSVSV…LPPFLMSPFT (442 aa). Polar residues predominate over residues 21–32; sequence TKASPDSKSPNS. Positions 35–49 are enriched in low complexity; it reads AIPSSSPLASSTKAS. In terms of domain architecture, bHLH spans 260-332; the sequence is PKKTAHNMIE…AKATEYIRHL (73 aa). A helical transmembrane segment spans residues 443–463; that stretch reads GTVLFNMLKIGVVLLGLFYLL. Residues 464–509 lie on the Lumenal side of the membrane; that stretch reads HDNSLFKGFKGEKKSKVSTRSSMSPSSILFRKTVFEKYCLLDHSTS. Residues 510 to 530 traverse the membrane as a helical segment; sequence TISLFFGLLIFTLKSAYGYLT. The Cytoplasmic portion of the chain corresponds to 531–900; it reads HRLSALYTSS…QEDLGYVSSA (370 aa). Residues Ser898 and Ser899 each carry the phosphoserine modification.

As to quaternary structure, forms a tight complex with scp1, composed of 4 copies of scp1 and 4 copies of sre1, which protects sre1 precursor from degradation by the proteasome. Post-translationally, in low oxygen or sterol conditions, undergoes proteolytic cleavage by rhomboid-type protease rbd2 and is released as soluble transcription factor from the membrane. In terms of processing, processed form is phosphorylated.

The protein localises to the endoplasmic reticulum membrane. The protein resides in the nucleus. Functionally, precursor of the transcription factor form (Processed sterol regulatory element-binding protein 1), which is embedded in the endoplasmic reticulum membrane. Low oxygen or sterol conditions promote processing of this form, releasing the transcription factor form that translocates into the nucleus and activates transcription of genes required for adaptation to anaerobic growth. In terms of biological role, transcriptional activator required for transcription of genes required for adaptation to anaerobic growth like those implicated in the nonrespiratory oxygen-consumptive biosynthetic pathways of sterol, heme, sphingolipid, and ubiquinone biosynthesis. May monitor oxygen levels through sterol synthesis steps which require oxygen. This Schizosaccharomyces pombe (strain 972 / ATCC 24843) (Fission yeast) protein is Sterol regulatory element-binding protein 1.